The following is a 288-amino-acid chain: Probable pectinesterase 56 (288 aa).

An N-terminal signal peptide occupies residues 1 to 27 (MAMTSTMQLLVLSFLVIASLFLGATVA). N-linked (GlcNAc...) asparagine glycosylation is found at Asn55 and Asn95. 2 residues coordinate substrate: Thr120 and Gln150. Asp173 (proton donor) is an active-site residue. The active-site Nucleophile is Asp194. Asn242 is a glycosylation site (N-linked (GlcNAc...) asparagine). Substrate-binding residues include Arg262 and Trp264.

It belongs to the pectinesterase family.

The protein resides in the secreted. The protein localises to the cell wall. The enzyme catalyses [(1-&gt;4)-alpha-D-galacturonosyl methyl ester](n) + n H2O = [(1-&gt;4)-alpha-D-galacturonosyl](n) + n methanol + n H(+). It participates in glycan metabolism; pectin degradation; 2-dehydro-3-deoxy-D-gluconate from pectin: step 1/5. Functionally, acts in the modification of cell walls via demethylesterification of cell wall pectin. This is Probable pectinesterase 56 (PME56) from Arabidopsis thaliana (Mouse-ear cress).